Here is a 593-residue protein sequence, read N- to C-terminus: MFPLRAQSASLGANSTLFFRAYAVSHRKSGSKIQAWKGLKRGANGANRANGTNSSQPESQSSKAVFQSGKFSQLHQPSKKVYEKSSSGLDSISTFEQLRIFPTVRAAMVAEIKSTYNMKGPRYQSKDELVLKPTPIQVAAIRKINQPRLKNNKNVKEEEVSAGRKSAPSTADLVNEEFKKINSLQKLKVFTLAAETGSGKTWAYLSSLLSKLKEDEFGLYESSEEKYRASRNAQMVKSVVLVPTHDLVEQVYSTLERANSIKFDVEKIGANSRLKEFLQLPEQNGSLNLSILKWGSGEAHKKLFDRCLKGRVDVLVTTPGKLASLSKLQNVNRPYRFLNHVEYCVLDEADTLMDESWIETTMPVIEKFKKLRDLIICSATIPKRFQTTLNRIFPTDDSIINIVTPSLHKLPKQIKVSVIDSELSPYHGSKTRALAQALYAITRDGTEPGLVKRVIVFVNKKESVNSLVDTLVNKFSHRPEDVIGITGEDKPEERSEKLEPFIKPAESIEEDPLNSKIKVLVTSDLMARGVNFVGIKNVIIMDIPHNSVDLVHRIGRTGRMNQSGRVILIVDKKKNKAWLSGLPNAVKRGIQMG.

The transit peptide at 1–106 directs the protein to the mitochondrion; the sequence is MFPLRAQSAS…QLRIFPTVRA (106 aa). Positions 42 to 51 are enriched in low complexity; sequence GANGANRANG. Residues 42 to 63 are disordered; it reads GANGANRANGTNSSQPESQSSK. Positions 52–63 are enriched in polar residues; sequence TNSSQPESQSSK. A Q motif motif is present at residues 130-137; that stretch reads VLKPTPIQ. Residues 181 to 399 form the Helicase ATP-binding domain; it reads INSLQKLKVF…NRIFPTDDSI (219 aa). 194 to 201 contributes to the ATP binding site; sequence AETGSGKT. Residues 347–350 carry the DEAD box motif; that stretch reads DEAD. The Helicase C-terminal domain occupies 433–593; that stretch reads ALAQALYAIT…NAVKRGIQMG (161 aa).

The protein belongs to the DEAD box helicase family. MRH4 subfamily.

It localises to the mitochondrion. The catalysed reaction is ATP + H2O = ADP + phosphate + H(+). Functionally, ATP-binding RNA helicase involved in mitochondrial RNA metabolism. Required for maintenance of mitochondrial DNA. In Scheffersomyces stipitis (strain ATCC 58785 / CBS 6054 / NBRC 10063 / NRRL Y-11545) (Yeast), this protein is ATP-dependent RNA helicase MRH4, mitochondrial (MRH4).